Consider the following 581-residue polypeptide: DNA primase (581 aa).

The CHC2-type zinc-finger motif lies at 40–64 (CPFHNEKTPSFTVNGEKQFYHCFGC). The Toprim domain occupies 259–341 (QRLLVVEGYM…GRQVRFMFLP (83 aa)). 3 residues coordinate Mg(2+): glutamate 265, aspartate 309, and aspartate 311.

This sequence belongs to the DnaG primase family. In terms of assembly, monomer. Interacts with DnaB. Zn(2+) is required as a cofactor. It depends on Mg(2+) as a cofactor.

It carries out the reaction ssDNA + n NTP = ssDNA/pppN(pN)n-1 hybrid + (n-1) diphosphate.. Functionally, RNA polymerase that catalyzes the synthesis of short RNA molecules used as primers for DNA polymerase during DNA replication. The protein is DNA primase of Salmonella typhimurium (strain LT2 / SGSC1412 / ATCC 700720).